The chain runs to 392 residues: ERBB-3 BINDING PROTEIN 1 (392 aa).

Necessary for nucleolar localization regions lie at residues 1 to 50 (MSSD…IVDI) and 298 to 392 (HLQP…NAQE). Positions 48 to 56 (VDICEKGDS) are RNA-binding. The segment at 355 to 372 (GIKKKKGGGKKKKAQKAG) is interaction with RNA. Residues 357–367 (KKKKGGGKKKK) carry the Nuclear localization signal motif. Over residues 358–369 (KKKGGGKKKKAQ) the composition is skewed to basic residues. The segment at 358-392 (KKKGGGKKKKAQKAGEKGEASTEAEPMDASSNAQE) is disordered.

This sequence belongs to the peptidase M24 family. Component of a ribonucleoprotein complex. Interacts with REIL1 and REIL2. As to expression, strongly expressed in calls, roots and flowers, to a lower extent, in stems and siliques, but hardly detectable in leaves.

It localises to the nucleus. Functionally, binds RNA. Associates with 28S, 18S and 5.8S mature rRNAs, several rRNA precursors and probably U3 small nucleolar RNA. May be involved in regulation of intermediate and late steps of rRNA processing. May be involved in ribosome assembly. Required for expression of cell cycle genes such as CYCD3-1, RNR2A and CDKB1-1. Promotes, in a dose- and auxin-dependent manner, organ growth by stimulating both cell proliferation and expansion, via the regulation of RBR1 levels. The sequence is that of ERBB-3 BINDING PROTEIN 1 from Arabidopsis thaliana (Mouse-ear cress).